Consider the following 354-residue polypeptide: Rhodopsin (354 aa).

The Extracellular segment spans residues 1 to 36 (MNGTEGPYFYVPMVNTTGIVRSPYEYPQYYLVSPAA). N-linked (GlcNAc...) asparagine glycans are attached at residues N2 and N15. A helical transmembrane segment spans residues 37 to 61 (YACLGAYMFFLILVGFPVNFLTLYV). At 62 to 73 (TIEHKKLRTPLN) the chain is on the cytoplasmic side. A helical membrane pass occupies residues 74–96 (YILLNLAVADLFMVFGGFTTTIY). The Extracellular portion of the chain corresponds to 97 to 110 (TSMHGYFVLGRLGC). A disulfide bond links C110 and C187. Residues 111–133 (NLEGYFATLGGEIGLWSLVVLAV) form a helical membrane-spanning segment. The 'Ionic lock' involved in activated form stabilization motif lies at 134–136 (ERW). At 134-152 (ERWLVVCKPISNFRFTENH) the chain is on the cytoplasmic side. Residues 153–173 (AIMGLVFTWIMANACAAPPLL) traverse the membrane as a helical segment. Residues 174-202 (GWSRYIPEGMQCSCGVDYYTRAEGFNNES) lie on the Extracellular side of the membrane. A helical transmembrane segment spans residues 203–224 (FVIYMFICHFCIPLVVVFFCYG). Topologically, residues 225-252 (RLLCAVKEAAAAQQESETTQRAEREVTR) are cytoplasmic. Residues 253 to 274 (MVVILVIGFLVCWTPYASVAWY) traverse the membrane as a helical segment. The Extracellular portion of the chain corresponds to 275 to 286 (IFSNQGSEFGPL). Residues 287 to 308 (FMTIPAFFAKSSSIYNPMIYIC) traverse the membrane as a helical segment. N6-(retinylidene)lysine is present on K296. Topologically, residues 309 to 354 (MNKQFRHCMITTLCCGKNPFEEEEGASTTASKTEASSVSSSSVSPA) are cytoplasmic. 2 S-palmitoyl cysteine lipidation sites follow: C322 and C323. The tract at residues 333-354 (GASTTASKTEASSVSSSSVSPA) is disordered. The segment covering 334 to 354 (ASTTASKTEASSVSSSSVSPA) has biased composition (low complexity).

It belongs to the G-protein coupled receptor 1 family. Opsin subfamily. Post-translationally, phosphorylated on some or all of the serine and threonine residues present in the C-terminal region. In terms of processing, contains one covalently linked retinal chromophore.

The protein localises to the membrane. Its subcellular location is the cell projection. It localises to the cilium. The protein resides in the photoreceptor outer segment. Photoreceptor required for image-forming vision at low light intensity. While most salt water fish species use retinal as chromophore, most freshwater fish use 3-dehydroretinal, or a mixture of retinal and 3-dehydroretinal. Light-induced isomerization of 11-cis to all-trans retinal triggers a conformational change that activates signaling via G-proteins. Subsequent receptor phosphorylation mediates displacement of the bound G-protein alpha subunit by arrestin and terminates signaling. In Gambusia affinis (Western mosquitofish), this protein is Rhodopsin (rho).